The following is a 185-amino-acid chain: Threonylcarbamoyl-AMP synthase (185 aa).

The 182-residue stretch at 4–185 (SWRVQQAARE…LATGEVVRPG (182 aa)) folds into the YrdC-like domain.

This sequence belongs to the SUA5 family. TsaC subfamily.

It is found in the cytoplasm. It carries out the reaction L-threonine + hydrogencarbonate + ATP = L-threonylcarbamoyladenylate + diphosphate + H2O. In terms of biological role, required for the formation of a threonylcarbamoyl group on adenosine at position 37 (t(6)A37) in tRNAs that read codons beginning with adenine. Catalyzes the conversion of L-threonine, HCO(3)(-)/CO(2) and ATP to give threonylcarbamoyl-AMP (TC-AMP) as the acyladenylate intermediate, with the release of diphosphate. This is Threonylcarbamoyl-AMP synthase from Pseudomonas entomophila (strain L48).